The chain runs to 61 residues: Photosystem II reaction center protein K (61 aa).

Residues 1 to 24 constitute a propeptide that is removed on maturation; the sequence is MPNILSLTCICFNSVLCPTSFFFA. A helical membrane pass occupies residues 32 to 52; the sequence is IFNPIVDVMPVIPVLFFLLAF.

It belongs to the PsbK family. In terms of assembly, PSII is composed of 1 copy each of membrane proteins PsbA, PsbB, PsbC, PsbD, PsbE, PsbF, PsbH, PsbI, PsbJ, PsbK, PsbL, PsbM, PsbT, PsbX, PsbY, PsbZ, Psb30/Ycf12, at least 3 peripheral proteins of the oxygen-evolving complex and a large number of cofactors. It forms dimeric complexes.

It is found in the plastid. It localises to the chloroplast thylakoid membrane. One of the components of the core complex of photosystem II (PSII). PSII is a light-driven water:plastoquinone oxidoreductase that uses light energy to abstract electrons from H(2)O, generating O(2) and a proton gradient subsequently used for ATP formation. It consists of a core antenna complex that captures photons, and an electron transfer chain that converts photonic excitation into a charge separation. The protein is Photosystem II reaction center protein K of Sorghum bicolor (Sorghum).